We begin with the raw amino-acid sequence, 445 residues long: Phenylacetate-coenzyme A ligase (445 aa).

The protein belongs to the phenylacetyl-CoA ligase family. In terms of assembly, monomer.

It catalyses the reaction 2-phenylacetate + ATP + CoA = phenylacetyl-CoA + AMP + diphosphate. The protein operates within aromatic compound metabolism; phenylacetate degradation. Functionally, catalyzes the activation of phenylacetic acid (PA) to phenylacetyl-CoA (PA-CoA). Involved in the phenylalanine metabolism. In Thermus thermophilus (strain ATCC BAA-163 / DSM 7039 / HB27), this protein is Phenylacetate-coenzyme A ligase.